A 557-amino-acid chain; its full sequence is Formate--tetrahydrofolate ligase 1 (557 aa).

Position 66–73 (66–73 (TPAGEGKT)) interacts with ATP.

It belongs to the formate--tetrahydrofolate ligase family.

It carries out the reaction (6S)-5,6,7,8-tetrahydrofolate + formate + ATP = (6R)-10-formyltetrahydrofolate + ADP + phosphate. It functions in the pathway one-carbon metabolism; tetrahydrofolate interconversion. The sequence is that of Formate--tetrahydrofolate ligase 1 from Streptococcus sanguinis (strain SK36).